We begin with the raw amino-acid sequence, 176 residues long: ATP-dependent protease subunit HslV (176 aa).

Threonine 5 is an active-site residue. The Na(+) site is built by alanine 161, cysteine 164, and threonine 167.

Belongs to the peptidase T1B family. HslV subfamily. A double ring-shaped homohexamer of HslV is capped on each side by a ring-shaped HslU homohexamer. The assembly of the HslU/HslV complex is dependent on binding of ATP.

The protein localises to the cytoplasm. The catalysed reaction is ATP-dependent cleavage of peptide bonds with broad specificity.. Its activity is regulated as follows. Allosterically activated by HslU binding. Its function is as follows. Protease subunit of a proteasome-like degradation complex believed to be a general protein degrading machinery. This is ATP-dependent protease subunit HslV from Desulforamulus reducens (strain ATCC BAA-1160 / DSM 100696 / MI-1) (Desulfotomaculum reducens).